The following is a 45-amino-acid chain: Large ribosomal subunit protein bL34 (45 aa).

The disordered stretch occupies residues 1 to 45 (MTKRTFGGTSRKRKRVSGFRVRMRSHTGRRVIKSRRKRGRERIAV). Basic residues predominate over residues 10–45 (SRKRKRVSGFRVRMRSHTGRRVIKSRRKRGRERIAV).

Belongs to the bacterial ribosomal protein bL34 family.

In Prochlorococcus marinus subsp. pastoris (strain CCMP1986 / NIES-2087 / MED4), this protein is Large ribosomal subunit protein bL34.